A 916-amino-acid chain; its full sequence is Nitrate reductase [NADH] 1 (916 aa).

The tract at residues 1 to 77 (MAASVQPRQF…DDEEEEQEDW (77 aa)) is disordered. Residues 66 to 76 (GSDDEEEEQED) are compositionally biased toward acidic residues. Cysteine 192 lines the Mo-molybdopterin pocket. The 76-residue stretch at 541–616 (GKQFTMSEVR…LDTYRIGELI (76 aa)) folds into the Cytochrome b5 heme-binding domain. Histidine 576 and histidine 599 together coordinate heme. One can recognise an FAD-binding FR-type domain in the interval 656–768 (RDKVPCQLVD…KGPLGHVEYT (113 aa)). Residues 708-711 (RAYT), 725-729 (LIKVY), phenylalanine 730, phenylalanine 737, 742-744 (LMT), serine 792, and threonine 795 contribute to the FAD site.

It belongs to the nitrate reductase family. Homodimer. FAD serves as cofactor. Heme is required as a cofactor. The cofactor is Mo-molybdopterin.

The catalysed reaction is nitrite + NAD(+) + H2O = nitrate + NADH + H(+). Functionally, nitrate reductase is a key enzyme involved in the first step of nitrate assimilation in plants, fungi and bacteria. In Oryza sativa subsp. japonica (Rice), this protein is Nitrate reductase [NADH] 1 (NIA1).